A 357-amino-acid chain; its full sequence is MSHTILIMAGGTGGHVFPGLAVAEYLKAAGWRIVWLGTEGGMETTLARQQGHALETIRFSGLRGKNVRTWLLLPARLLLAFWQSARVIRKVRPDVVLGMGGYPAFPGGMMASLLARPLLIHEQNSIPGLANRILSRLADRVLLGFPDAIKSEKKAVFCGNPVRDEITRLAPPAQRYAGRSGSIKLLVVGGSLGAQALNTIVPRALKRIPEGMRPQVTHQAGARHLEALKQNYSEAGVEGELVTFIDNMASRYGESDLVICRAGALTVSELAAAGVASILVPFPYAVDDHQSTNAKFLSGKGAAILLPQSQLTPEGLAELLVGMSRGQLMEMACRARELAQPDATRCVAETCMQMVAV.

UDP-N-acetyl-alpha-D-glucosamine is bound by residues 12-14, Asn124, Arg163, Ser191, Ile245, 264-269, and Gln290; these read TGG and ALTVSE.

This sequence belongs to the glycosyltransferase 28 family. MurG subfamily.

It localises to the cell inner membrane. The enzyme catalyses di-trans,octa-cis-undecaprenyl diphospho-N-acetyl-alpha-D-muramoyl-L-alanyl-D-glutamyl-meso-2,6-diaminopimeloyl-D-alanyl-D-alanine + UDP-N-acetyl-alpha-D-glucosamine = di-trans,octa-cis-undecaprenyl diphospho-[N-acetyl-alpha-D-glucosaminyl-(1-&gt;4)]-N-acetyl-alpha-D-muramoyl-L-alanyl-D-glutamyl-meso-2,6-diaminopimeloyl-D-alanyl-D-alanine + UDP + H(+). Its pathway is cell wall biogenesis; peptidoglycan biosynthesis. Cell wall formation. Catalyzes the transfer of a GlcNAc subunit on undecaprenyl-pyrophosphoryl-MurNAc-pentapeptide (lipid intermediate I) to form undecaprenyl-pyrophosphoryl-MurNAc-(pentapeptide)GlcNAc (lipid intermediate II). This chain is UDP-N-acetylglucosamine--N-acetylmuramyl-(pentapeptide) pyrophosphoryl-undecaprenol N-acetylglucosamine transferase, found in Nitrosospira multiformis (strain ATCC 25196 / NCIMB 11849 / C 71).